A 370-amino-acid chain; its full sequence is Cell division protein DivIB (370 aa).

Residues 1-65 (MKKKKDEELT…SNKKGTKRIV (65 aa)) are disordered. Topologically, residues 1–74 (MKKKKDEELT…VKEQRLSRQK (74 aa)) are cytoplasmic. Composition is skewed to basic residues over residues 25-34 (SRFKRKRKAT) and 47-63 (RNNRNKVKKSNKKGTKR). Residues 75 to 95 (LGILIGSTLIVIALFFGYFYS) form a helical membrane-spanning segment. The Extracellular segment spans residues 96-370 (SISRVQKFSV…STVNTQQDID (275 aa)). The POTRA domain maps to 98–169 (SRVQKFSVSG…GKVKIKVKEN (72 aa)). Residues 295–370 (SGWTDEAKAA…STVNTQQDID (76 aa)) form a disordered region. Low complexity-rich tracts occupy residues 304 to 314 (ASESSKSAESS) and 327 to 342 (SESADSTSASADSTET). The span at 356–370 (SSNAESTVNTQQDID) shows a compositional bias: polar residues.

This sequence belongs to the FtsQ/DivIB family. DivIB subfamily.

Its subcellular location is the cell membrane. Its function is as follows. Cell division protein that may be involved in stabilizing or promoting the assembly of the division complex. This chain is Cell division protein DivIB, found in Pediococcus pentosaceus (strain ATCC 25745 / CCUG 21536 / LMG 10740 / 183-1w).